Reading from the N-terminus, the 516-residue chain is GMP synthase [glutamine-hydrolyzing] (516 aa).

The region spanning 8–198 (KILILDFGSQ…VVNICGCDTL (191 aa)) is the Glutamine amidotransferase type-1 domain. The active-site Nucleophile is the Cys84. Active-site residues include His172 and Glu174. Positions 199–391 (WNIENIIEND…LGLPYNMLYR (193 aa)) constitute a GMPS ATP-PPase domain. 226–232 (SGGVDSS) is a binding site for ATP.

As to quaternary structure, homodimer.

The catalysed reaction is XMP + L-glutamine + ATP + H2O = GMP + L-glutamate + AMP + diphosphate + 2 H(+). The protein operates within purine metabolism; GMP biosynthesis; GMP from XMP (L-Gln route): step 1/1. Functionally, catalyzes the synthesis of GMP from XMP. The sequence is that of GMP synthase [glutamine-hydrolyzing] from Francisella tularensis subsp. novicida (strain U112).